Here is a 232-residue protein sequence, read N- to C-terminus: Octanoyltransferase (232 aa).

The BPL/LPL catalytic domain occupies 32 to 219 (NIIYDTLILL…SFKVFNFSSY (188 aa)). Substrate is bound by residues 77–84 (RGGDITYH), 140–142 (AIG), and 153–155 (GFA). The active-site Acyl-thioester intermediate is cysteine 171.

The protein belongs to the LipB family.

The protein resides in the cytoplasm. It carries out the reaction octanoyl-[ACP] + L-lysyl-[protein] = N(6)-octanoyl-L-lysyl-[protein] + holo-[ACP] + H(+). It functions in the pathway protein modification; protein lipoylation via endogenous pathway; protein N(6)-(lipoyl)lysine from octanoyl-[acyl-carrier-protein]: step 1/2. Catalyzes the transfer of endogenously produced octanoic acid from octanoyl-acyl-carrier-protein onto the lipoyl domains of lipoate-dependent enzymes. Lipoyl-ACP can also act as a substrate although octanoyl-ACP is likely to be the physiological substrate. The polypeptide is Octanoyltransferase (Dictyoglomus turgidum (strain DSM 6724 / Z-1310)).